Consider the following 1303-residue polypeptide: Serine/threonine-protein kinase ULK4 (1303 aa).

One can recognise a Protein kinase domain in the interval 4–280 (FVLYEEIGRG…WEGVLQHPFW (277 aa)). D121 (proton acceptor) is an active-site residue. Disordered stretches follow at residues 304–332 (ECSG…AHRL) and 369–401 (TSAM…GHLS). Residues 384-400 (SSPQKTSPLSKMTSGHL) show a composition bias toward polar residues. HEAT repeat units follow at residues 504–543 (RLLH…HTTE), 727–765 (LIQE…HNRD), 796–834 (NEYL…RKHP), 926–964 (STVM…LLVS), 1025–1063 (LVEE…NLVA), 1105–1143 (STLL…DTQA), and 1151–1189 (SKPL…LYGG).

This sequence belongs to the protein kinase superfamily. Ser/Thr protein kinase family. APG1/unc-51/ULK1 subfamily. As to expression, expressed in embryonic and adult brain. In the brain, widely expressed, with highest levels in layers II/III and V of the cortex, piriform cortex, CA1-3 of hippocampus, dentate gyrus, ependymal cells lining the ventricles and choroid plexus, and in the thalamic reticular nucleus (at protein level).

It catalyses the reaction L-seryl-[protein] + ATP = O-phospho-L-seryl-[protein] + ADP + H(+). The enzyme catalyses L-threonyl-[protein] + ATP = O-phospho-L-threonyl-[protein] + ADP + H(+). In terms of biological role, may be involved in the remodeling of cytoskeletal components, such as alpha-tubulin, and in this way regulates neurite branching and elongation, as well as cell motility. The chain is Serine/threonine-protein kinase ULK4 (Ulk4) from Mus musculus (Mouse).